The chain runs to 173 residues: NAD(P)H-quinone oxidoreductase subunit J (173 aa).

The protein belongs to the complex I 30 kDa subunit family. As to quaternary structure, NDH-1 can be composed of about 15 different subunits; different subcomplexes with different compositions have been identified which probably have different functions.

The protein resides in the cellular thylakoid membrane. The catalysed reaction is a plastoquinone + NADH + (n+1) H(+)(in) = a plastoquinol + NAD(+) + n H(+)(out). The enzyme catalyses a plastoquinone + NADPH + (n+1) H(+)(in) = a plastoquinol + NADP(+) + n H(+)(out). NDH-1 shuttles electrons from an unknown electron donor, via FMN and iron-sulfur (Fe-S) centers, to quinones in the respiratory and/or the photosynthetic chain. The immediate electron acceptor for the enzyme in this species is believed to be plastoquinone. Couples the redox reaction to proton translocation, and thus conserves the redox energy in a proton gradient. Cyanobacterial NDH-1 also plays a role in inorganic carbon-concentration. The protein is NAD(P)H-quinone oxidoreductase subunit J of Prochlorococcus marinus (strain NATL2A).